The sequence spans 232 residues: 2-C-methyl-D-erythritol 4-phosphate cytidylyltransferase (232 aa).

Belongs to the IspD/TarI cytidylyltransferase family. IspD subfamily.

It carries out the reaction 2-C-methyl-D-erythritol 4-phosphate + CTP + H(+) = 4-CDP-2-C-methyl-D-erythritol + diphosphate. The protein operates within isoprenoid biosynthesis; isopentenyl diphosphate biosynthesis via DXP pathway; isopentenyl diphosphate from 1-deoxy-D-xylulose 5-phosphate: step 2/6. Catalyzes the formation of 4-diphosphocytidyl-2-C-methyl-D-erythritol from CTP and 2-C-methyl-D-erythritol 4-phosphate (MEP). The polypeptide is 2-C-methyl-D-erythritol 4-phosphate cytidylyltransferase (Nitrosospira multiformis (strain ATCC 25196 / NCIMB 11849 / C 71)).